Here is a 486-residue protein sequence, read N- to C-terminus: Cardiolipin synthase A (486 aa).

2 helical membrane passes run 3-23 (TVYT…IAGV) and 38-58 (MAWL…YLAV). PLD phosphodiesterase domains are found at residues 219–246 (MDLR…VDPR) and 399–426 (EGGL…DMRS). Catalysis depends on residues His224, Lys226, Asp231, His404, Lys406, and Asp411.

It belongs to the phospholipase D family. Cardiolipin synthase subfamily. ClsA sub-subfamily.

The protein resides in the cell inner membrane. The enzyme catalyses 2 a 1,2-diacyl-sn-glycero-3-phospho-(1'-sn-glycerol) = a cardiolipin + glycerol. In terms of biological role, catalyzes the reversible phosphatidyl group transfer from one phosphatidylglycerol molecule to another to form cardiolipin (CL) (diphosphatidylglycerol) and glycerol. The chain is Cardiolipin synthase A from Shigella boydii serotype 4 (strain Sb227).